The chain runs to 477 residues: Glycogen synthase (477 aa).

An ADP-alpha-D-glucose-binding site is contributed by Lys15.

This sequence belongs to the glycosyltransferase 1 family. Bacterial/plant glycogen synthase subfamily.

It catalyses the reaction [(1-&gt;4)-alpha-D-glucosyl](n) + ADP-alpha-D-glucose = [(1-&gt;4)-alpha-D-glucosyl](n+1) + ADP + H(+). The protein operates within glycan biosynthesis; glycogen biosynthesis. Its function is as follows. Synthesizes alpha-1,4-glucan chains using ADP-glucose. The chain is Glycogen synthase from Mannheimia succiniciproducens (strain KCTC 0769BP / MBEL55E).